An 879-amino-acid polypeptide reads, in one-letter code: Interference hedgehog (879 aa).

An N-terminal signal peptide occupies residues 1 to 20; the sequence is MTLLTSSLLLFSLLTSRLEA. Residues 21-703 lie on the Extracellular side of the membrane; it reads IPVLEKSPAH…ETFNMSPMLT (683 aa). 4 Ig-like C2-type domains span residues 45–142, 132–232, 252–340, and 346–432; these read PGVR…IARL, PLVV…ERIQ, PHLL…YIKV, and PQIV…LQVN. Cystine bridges form between C68–C126, C173–C220, C276–C324, and C367–C414. N-linked (GlcNAc...) asparagine glycosylation is found at N102 and N209. A disordered region spans residues 426-467; the sequence is GTLLQVNPKQIQEPRESGGTHRPKPNQGSKQKQMYPPSPPNV. 2 consecutive Fibronectin type-III domains span residues 461–567 and 575–670; these read PPSP…LQPG and VPEL…TQRP. N-linked (GlcNAc...) asparagine glycosylation is present at N466. The heparin site is built by R497, K501, K503, and R541. A glycan (N-linked (GlcNAc...) asparagine) is linked at N557. The disordered stretch occupies residues 662-698; the sequence is LKQGRTQRPKTSTTEEPTLQMGDRDTTTPSHNETFNM. Composition is skewed to polar residues over residues 665 to 678 and 688 to 698; these read GRTQRPKTSTTEEP and TTPSHNETFNM. N693 is a glycosylation site (N-linked (GlcNAc...) asparagine). A helical transmembrane segment spans residues 704–724; that stretch reads GTLGGGAVLTLLLISICLCVC. Topologically, residues 725 to 879 are cytoplasmic; the sequence is RRRSSRSRGN…SSGSLNSVGV (155 aa). The tract at residues 728–879 is disordered; the sequence is SSRSRGNNPN…SSGSLNSVGV (152 aa). 2 stretches are compositionally biased toward low complexity: residues 822-836 and 863-879; these read RAGGSNGSNNGNNNN and SSRSENLSSGSLNSVGV.

The protein belongs to the immunoglobulin superfamily. IHOG family. Homodimer. Heterotetramer; 2 iHog chains bind 2 hh chains when facilitated by heparin, heparin is required to promote high-affinity interactions between hh and iHog.

The protein resides in the membrane. Functionally, mediates response to the active Hedgehog (Hh) protein signal in embryos, functioning upstream or at the level of patched (ptc). The polypeptide is Interference hedgehog (Drosophila erecta (Fruit fly)).